We begin with the raw amino-acid sequence, 129 residues long: SOSS complex subunit C homolog (129 aa).

The tract at residues 105-129 (RLEPLPSPATTPTTPNAPPSHNISK) is disordered.

This sequence belongs to the SOSS-C family.

This chain is SOSS complex subunit C homolog, found in Drosophila erecta (Fruit fly).